Consider the following 408-residue polypeptide: uncharacterized protein (408 aa).

Residues N376 to N386 are compositionally biased toward polar residues. The interval N376–Q408 is disordered. Residues E389–E401 are compositionally biased toward basic and acidic residues.

This is an uncharacterized protein from Acanthamoeba polyphaga (Amoeba).